The sequence spans 62 residues: MKSTLMTASLLILVLLSIVDYASVYAELIDSEISMERQWINACFNICMKISSDQKYCKSFCG.

The signal sequence occupies residues 1–26; the sequence is MKSTLMTASLLILVLLSIVDYASVYA. A propeptide spanning residues 27–36 is cleaved from the precursor; it reads ELIDSEISME. Cystine bridges form between cysteine 43-cysteine 61 and cysteine 47-cysteine 57.

The protein belongs to the short scorpion toxin superfamily. Potassium channel inhibitor kappa-KTx family. Kappa-KTx 3 subfamily. Expressed by the venom gland.

It localises to the secreted. In terms of biological role, potassium channel inhibitor (Kv). The polypeptide is Potassium channel toxin kappa-KTx 3.3 (Heterometrus petersii (Asian forest scorpion)).